The following is a 376-amino-acid chain: Homeobox protein extradenticle (376 aa).

The tract at residues 16–35 is disordered; the sequence is APQGYSLSGQDDGQNTGNEN. Residues 20–34 show a composition bias toward polar residues; the sequence is YSLSGQDDGQNTGNE. Residues 38 to 237 form the PBC domain; the sequence is RKQKDIGEIL…VMILRSRFLD (200 aa). The interval 45–124 is PBC-A; the sequence is EILQQIMSIS…EGVAGPEKGG (80 aa). The interval 127-237 is PBC-B; sequence AAAASAAAAS…VMILRSRFLD (111 aa). Residues 238 to 300 constitute a DNA-binding region (homeobox; TALE-type); that stretch reads ARRKRRNFSK…NKRIRYKKNI (63 aa). The span at 318–335 shows a compositional bias: low complexity; it reads ASPYSMAGPPSGTTTPMM. Residues 318–376 form a disordered region; it reads ASPYSMAGPPSGTTTPMMSPAPPQDSMGYTMGSGGYDQQQPYDNSMGGYDPNLHQDLSP.

Belongs to the TALE/PBX homeobox family. In terms of assembly, interacts with Ubx and hth.

It is found in the nucleus. In terms of biological role, transcription factor which acts with the selector homeodomain proteins altering the regulation of downstream target genes such as wingless (wg), teashirt (tsh) and decapentaplegic (dpp), thus affecting segmental identity. Delimits the eye field and prevent inappropriate eye development. Required for proper localization of chordotonal organs within the peripheral nervous system. This chain is Homeobox protein extradenticle, found in Drosophila pseudoobscura pseudoobscura (Fruit fly).